The chain runs to 475 residues: UDP-N-acetylmuramate--L-alanine ligase (475 aa).

118-124 (GTHGKTT) is a binding site for ATP.

The protein belongs to the MurCDEF family.

Its subcellular location is the cytoplasm. The catalysed reaction is UDP-N-acetyl-alpha-D-muramate + L-alanine + ATP = UDP-N-acetyl-alpha-D-muramoyl-L-alanine + ADP + phosphate + H(+). It functions in the pathway cell wall biogenesis; peptidoglycan biosynthesis. In terms of biological role, cell wall formation. The chain is UDP-N-acetylmuramate--L-alanine ligase from Thermosynechococcus vestitus (strain NIES-2133 / IAM M-273 / BP-1).